The chain runs to 418 residues: Gamma-glutamyl phosphate reductase (418 aa).

Belongs to the gamma-glutamyl phosphate reductase family.

The protein localises to the cytoplasm. The enzyme catalyses L-glutamate 5-semialdehyde + phosphate + NADP(+) = L-glutamyl 5-phosphate + NADPH + H(+). Its pathway is amino-acid biosynthesis; L-proline biosynthesis; L-glutamate 5-semialdehyde from L-glutamate: step 2/2. In terms of biological role, catalyzes the NADPH-dependent reduction of L-glutamate 5-phosphate into L-glutamate 5-semialdehyde and phosphate. The product spontaneously undergoes cyclization to form 1-pyrroline-5-carboxylate. This Halothermothrix orenii (strain H 168 / OCM 544 / DSM 9562) protein is Gamma-glutamyl phosphate reductase.